Consider the following 285-residue polypeptide: Vacuolar protein sorting-associated protein 37B (285 aa).

Positions 50–170 (ASNRSLAEGN…EMVLKGQRLP (121 aa)) are interaction with IST1. In terms of domain architecture, VPS37 C-terminal spans 84-173 (FEAYQIKKTK…LKGQRLPQAL (90 aa)). The interval 175 to 201 (PLPPRLPELAPTAPLPYPAPEASGPPA) is disordered. At Arg218 the chain carries Omega-N-methylarginine. The segment at 230 to 285 (GQAVPYPGLQCPPLPPRVGLPTQQGFSSQFVSPYPPPLPQRPPPRLPPHQPGFILQ) is disordered. Residues 250–260 (PTQQGFSSQFV) show a composition bias toward polar residues. Positions 262 to 279 (PYPPPLPQRPPPRLPPHQ) are enriched in pro residues.

This sequence belongs to the VPS37 family. In terms of assembly, component of the ESCRT-I complex (endosomal sorting complex required for transport I) which consists of TSG101, VPS28, a VPS37 protein (VPS37A to -D) and MVB12A or MVB12B in a 1:1:1:1 stoichiometry. Interacts with TSG101, VPS28, MVB12A and MVB12B. Component of the ESCRT-I complex (endosomal sorting complex required for transport I) which consists of TSG101, VPS28, a VPS37 protein (VPS37A to -D) and UBAP1 in a 1:1:1:1 stoichiometry. Interacts with CEP55. Interacts with IST1. As to expression, widely expressed. Expressed in macrophages and lymphocytes.

It localises to the late endosome membrane. Functionally, component of the ESCRT-I complex, a regulator of vesicular trafficking process. Required for the sorting of endocytic ubiquitinated cargos into multivesicular bodies. May be involved in cell growth and differentiation. The polypeptide is Vacuolar protein sorting-associated protein 37B (VPS37B) (Homo sapiens (Human)).